A 390-amino-acid chain; its full sequence is MPPRSLSNLSFPTEANESELVPEVWEKDFLPDSDGTTAELVIRCVIPSLYLIIISVGLLGNIMLVKIFLTNSAMRNVPNIFISNLAAGDLLLLLTCVPVDASRYFFDEWVFGKLGCKLIPAIQLTSVGVSVFTLTALSADRYRAIVNPMDMQTSGVLLWTSLKAVGIWVVSVLLAVPEAVFSEVARIGSLDNSSFTACIPYPQTDELHPKIHSVLIFLVYFLIPLVIISIYYYHIAKTLIKSAHNLPGEYNEHTKKQMETRKRLAKIVLVFVGCFVFCWFPNHVLYLYRSFNYKEIDPSLGHMIVTLVARVLSFSNSCVNPFALYLLSESFRKHFNSQLCCGRKSYPERSTSYLLSSSAVRMTSLKSNTKNVVTNSVLLNGHSTKQEIAL.

Residues 1–41 (MPPRSLSNLSFPTEANESELVPEVWEKDFLPDSDGTTAELV) are Extracellular-facing. Asn-8 and Asn-16 each carry an N-linked (GlcNAc...) asparagine glycan. The helical transmembrane segment at 42–65 (IRCVIPSLYLIIISVGLLGNIMLV) threads the bilayer. Residues 66–79 (KIFLTNSAMRNVPN) lie on the Cytoplasmic side of the membrane. The helical transmembrane segment at 80 to 99 (IFISNLAAGDLLLLLTCVPV) threads the bilayer. Topologically, residues 100-117 (DASRYFFDEWVFGKLGCK) are extracellular. Cys-116 and Cys-198 form a disulfide bridge. Residues 118-139 (LIPAIQLTSVGVSVFTLTALSA) form a helical membrane-spanning segment. Residues 140–156 (DRYRAIVNPMDMQTSGV) are Cytoplasmic-facing. The helical transmembrane segment at 157–177 (LLWTSLKAVGIWVVSVLLAVP) threads the bilayer. The Extracellular portion of the chain corresponds to 178–211 (EAVFSEVARIGSLDNSSFTACIPYPQTDELHPKI). Residue Asn-192 is glycosylated (N-linked (GlcNAc...) asparagine). Residues 212–235 (HSVLIFLVYFLIPLVIISIYYYHI) traverse the membrane as a helical segment. Residues 236–266 (AKTLIKSAHNLPGEYNEHTKKQMETRKRLAK) lie on the Cytoplasmic side of the membrane. A helical transmembrane segment spans residues 267–287 (IVLVFVGCFVFCWFPNHVLYL). The Extracellular segment spans residues 288–299 (YRSFNYKEIDPS). Residues 300–327 (LGHMIVTLVARVLSFSNSCVNPFALYLL) traverse the membrane as a helical segment. At 328–390 (SESFRKHFNS…GHSTKQEIAL (63 aa)) the chain is on the cytoplasmic side. Cys-341 carries S-palmitoyl cysteine lipidation. Ser-352 is modified (phosphoserine).

Belongs to the G-protein coupled receptor 1 family. Expressed in a subset of neurons of the pre-Botzinger complex. Within the pre-Botzinger complex, there is some overlap with neurons expressing Grpr with some cells expressing only Grpr or Nmbr while some cells express both. Expressed in dorsal root ganglion neurons and mast cells. Expressed in lung.

The protein resides in the cell membrane. Its function is as follows. Receptor for neuromedin-B. Contributes to the maintenance of basal sigh rate through signaling in the pre-Botzinger complex, a cluster of several thousand neurons in the ventrolateral medulla responsible for inspiration during respiratory activity. Contributes to the induction of sneezing following exposure to chemical irritants or allergens which causes release of NMB by nasal sensory neurons and activation of NMBR-expressing neurons in the sneeze-evoking region of the brainstem. These in turn activate neurons of the caudal ventral respiratory group, giving rise to the sneezing response. Contributes to induction of acute itch, possibly through its activation on dorsal root ganglion neurons by the NMB peptide. Plays a role in the innate immune response to influenza A virus infection by enhancing interferon alpha expression and reducing expression of IL6. Plays a role in CSF1-induced proliferation of osteoclast precursors by contributing to the positive regulation of the expression of the CSF1 receptor CSF1R. The sequence is that of Neuromedin-B receptor (Nmbr) from Mus musculus (Mouse).